The following is a 156-amino-acid chain: Ribosomal RNA large subunit methyltransferase H (156 aa).

Residues glycine 104 and 123–128 (LSPMVM) each bind S-adenosyl-L-methionine.

Belongs to the RNA methyltransferase RlmH family. Homodimer.

It is found in the cytoplasm. It catalyses the reaction pseudouridine(1915) in 23S rRNA + S-adenosyl-L-methionine = N(3)-methylpseudouridine(1915) in 23S rRNA + S-adenosyl-L-homocysteine + H(+). In terms of biological role, specifically methylates the pseudouridine at position 1915 (m3Psi1915) in 23S rRNA. The chain is Ribosomal RNA large subunit methyltransferase H from Bdellovibrio bacteriovorus (strain ATCC 15356 / DSM 50701 / NCIMB 9529 / HD100).